We begin with the raw amino-acid sequence, 156 residues long: FAD synthase (156 aa).

ATP contacts are provided by residues 9-10 (TF), 14-17 (HPGH), N92, and H119.

This sequence belongs to the archaeal FAD synthase family. Homodimer. The cofactor is a divalent metal cation.

It catalyses the reaction FMN + ATP + H(+) = FAD + diphosphate. Its pathway is cofactor biosynthesis; FAD biosynthesis; FAD from FMN: step 1/1. Functionally, catalyzes the transfer of the AMP portion of ATP to flavin mononucleotide (FMN) to produce flavin adenine dinucleotide (FAD) coenzyme. The polypeptide is FAD synthase (Methanospirillum hungatei JF-1 (strain ATCC 27890 / DSM 864 / NBRC 100397 / JF-1)).